A 622-amino-acid polypeptide reads, in one-letter code: Gamma tubulin complex adapter SPC72 (622 aa).

Disordered stretches follow at residues Met-1–Met-58 and Asp-221–Ser-263. Positions Leu-228–Leu-238 are enriched in polar residues. Positions Glu-239 to Asn-250 are enriched in basic and acidic residues.

As to quaternary structure, homooligomer. Interacts with CDC5, KAR1, KIN4, SPC97, SPC98, STU2 and TUB4. In terms of processing, phosphorylated by CDC5.

Its subcellular location is the cytoplasm. It is found in the cytoskeleton. The protein resides in the microtubule organizing center. It localises to the spindle pole body. In terms of biological role, spindle pole body (SPB) component that acts as the gamma-tubulin complex-binding protein of the SPB outer plaque. Anchors cytoplasmic microtubules at the half bridge of the spindle pole body (SPB) and accordingly functions in nuclear position and spindle orientation, including anaphase spindle migration into the bud. Recruits KIN4 kinase to both SPBs when cytoplasmic microtubules are defective, to delay mitotic exit. Links cytoplasmic microtubules with spindle orientation checkpoint (SPOC) components and, therefore, could function as part of the sensors of spindle orientation defects. Required for cytoplasmic astral microtubule growth during mitosis. Is strictly required for mating and karyogamy. The sequence is that of Gamma tubulin complex adapter SPC72 (SPC72) from Saccharomyces cerevisiae (strain ATCC 204508 / S288c) (Baker's yeast).